Consider the following 162-residue polypeptide: Large ribosomal subunit protein uL10 (162 aa).

It belongs to the universal ribosomal protein uL10 family. In terms of assembly, part of the ribosomal stalk of the 50S ribosomal subunit. The N-terminus interacts with L11 and the large rRNA to form the base of the stalk. The C-terminus forms an elongated spine to which L12 dimers bind in a sequential fashion forming a multimeric L10(L12)X complex.

Forms part of the ribosomal stalk, playing a central role in the interaction of the ribosome with GTP-bound translation factors. This Vibrio vulnificus (strain CMCP6) protein is Large ribosomal subunit protein uL10.